Reading from the N-terminus, the 412-residue chain is Protein MT3510 (412 aa).

N6-(pyridoxal phosphate)lysine is present on Lys-227.

Belongs to the DegT/DnrJ/EryC1 family.

This Mycobacterium tuberculosis (strain CDC 1551 / Oshkosh) protein is Protein MT3510.